A 186-amino-acid polypeptide reads, in one-letter code: uncharacterized protein (186 aa).

This is an uncharacterized protein from Caenorhabditis elegans.